The primary structure comprises 211 residues: Pyridoxine/pyridoxamine 5'-phosphate oxidase (211 aa).

Substrate-binding positions include 8–11 (RRDY) and K66. Residues 61–66 (RLVLLK), 76–77 (FT), R82, K83, and Q105 each bind FMN. Positions 123, 127, and 131 each coordinate substrate. FMN is bound by residues 140 to 141 (QS) and W184. Residue 190 to 192 (RLH) participates in substrate binding. Position 194 (R194) interacts with FMN.

The protein belongs to the pyridoxamine 5'-phosphate oxidase family. As to quaternary structure, homodimer. The cofactor is FMN.

The catalysed reaction is pyridoxamine 5'-phosphate + O2 + H2O = pyridoxal 5'-phosphate + H2O2 + NH4(+). It carries out the reaction pyridoxine 5'-phosphate + O2 = pyridoxal 5'-phosphate + H2O2. It participates in cofactor metabolism; pyridoxal 5'-phosphate salvage; pyridoxal 5'-phosphate from pyridoxamine 5'-phosphate: step 1/1. The protein operates within cofactor metabolism; pyridoxal 5'-phosphate salvage; pyridoxal 5'-phosphate from pyridoxine 5'-phosphate: step 1/1. In terms of biological role, catalyzes the oxidation of either pyridoxine 5'-phosphate (PNP) or pyridoxamine 5'-phosphate (PMP) into pyridoxal 5'-phosphate (PLP). The protein is Pyridoxine/pyridoxamine 5'-phosphate oxidase of Thermosynechococcus vestitus (strain NIES-2133 / IAM M-273 / BP-1).